The following is a 265-amino-acid chain: Indole-3-glycerol phosphate synthase (265 aa).

This sequence belongs to the TrpC family.

The enzyme catalyses 1-(2-carboxyphenylamino)-1-deoxy-D-ribulose 5-phosphate + H(+) = (1S,2R)-1-C-(indol-3-yl)glycerol 3-phosphate + CO2 + H2O. It participates in amino-acid biosynthesis; L-tryptophan biosynthesis; L-tryptophan from chorismate: step 4/5. The sequence is that of Indole-3-glycerol phosphate synthase from Xanthomonas campestris pv. campestris (strain 8004).